Consider the following 556-residue polypeptide: Formate--tetrahydrofolate ligase (556 aa).

65-72 (TPAGEGKS) is a binding site for ATP.

Belongs to the formate--tetrahydrofolate ligase family.

The enzyme catalyses (6S)-5,6,7,8-tetrahydrofolate + formate + ATP = (6R)-10-formyltetrahydrofolate + ADP + phosphate. Its pathway is one-carbon metabolism; tetrahydrofolate interconversion. This Clostridium botulinum (strain Alaska E43 / Type E3) protein is Formate--tetrahydrofolate ligase.